The chain runs to 433 residues: Enolase (433 aa).

Gln-167 contributes to the (2R)-2-phosphoglycerate binding site. Glu-209 acts as the Proton donor in catalysis. The Mg(2+) site is built by Asp-246, Glu-291, and Asp-318. (2R)-2-phosphoglycerate is bound by residues Lys-343, Arg-372, Ser-373, and Lys-394. The Proton acceptor role is filled by Lys-343.

Belongs to the enolase family. In terms of assembly, component of the RNA degradosome, a multiprotein complex involved in RNA processing and mRNA degradation. The cofactor is Mg(2+).

Its subcellular location is the cytoplasm. The protein resides in the secreted. The protein localises to the cell surface. It catalyses the reaction (2R)-2-phosphoglycerate = phosphoenolpyruvate + H2O. It participates in carbohydrate degradation; glycolysis; pyruvate from D-glyceraldehyde 3-phosphate: step 4/5. Catalyzes the reversible conversion of 2-phosphoglycerate (2-PG) into phosphoenolpyruvate (PEP). It is essential for the degradation of carbohydrates via glycolysis. The sequence is that of Enolase from Aeromonas hydrophila subsp. hydrophila (strain ATCC 7966 / DSM 30187 / BCRC 13018 / CCUG 14551 / JCM 1027 / KCTC 2358 / NCIMB 9240 / NCTC 8049).